We begin with the raw amino-acid sequence, 591 residues long: 2-succinyl-5-enolpyruvyl-6-hydroxy-3-cyclohexene-1-carboxylate synthase (591 aa).

This sequence belongs to the TPP enzyme family. MenD subfamily. As to quaternary structure, homodimer. The cofactor is Mg(2+). Mn(2+) is required as a cofactor. It depends on thiamine diphosphate as a cofactor.

It catalyses the reaction isochorismate + 2-oxoglutarate + H(+) = 5-enolpyruvoyl-6-hydroxy-2-succinyl-cyclohex-3-ene-1-carboxylate + CO2. Its pathway is quinol/quinone metabolism; 1,4-dihydroxy-2-naphthoate biosynthesis; 1,4-dihydroxy-2-naphthoate from chorismate: step 2/7. It participates in quinol/quinone metabolism; menaquinone biosynthesis. In terms of biological role, catalyzes the thiamine diphosphate-dependent decarboxylation of 2-oxoglutarate and the subsequent addition of the resulting succinic semialdehyde-thiamine pyrophosphate anion to isochorismate to yield 2-succinyl-5-enolpyruvyl-6-hydroxy-3-cyclohexene-1-carboxylate (SEPHCHC). The protein is 2-succinyl-5-enolpyruvyl-6-hydroxy-3-cyclohexene-1-carboxylate synthase of Salinibacter ruber (strain DSM 13855 / M31).